The primary structure comprises 797 residues: Probable exo-1,4-beta-xylosidase xlnD (797 aa).

A signal peptide spans 1–20; it reads MPGAASIVAVLAALLPTALG. Residues Asn-23, Asn-87, Asn-142, and Asn-237 are each glycosylated (N-linked (GlcNAc...) asparagine). Asp-310 is an active-site residue. Residues Asn-326, Asn-391, Asn-404, Asn-442, Asn-479, Asn-521, Asn-617, Asn-644, Asn-657, Asn-684, and Asn-706 are each glycosylated (N-linked (GlcNAc...) asparagine).

This sequence belongs to the glycosyl hydrolase 3 family.

The protein resides in the secreted. The enzyme catalyses Hydrolysis of (1-&gt;4)-beta-D-xylans, to remove successive D-xylose residues from the non-reducing termini.. It participates in glycan degradation; xylan degradation. Functionally, xylan 1,4-beta-xylosidase involved in the hydrolysis of xylan, a major structural heterogeneous polysaccharide found in plant biomass representing the second most abundant polysaccharide in the biosphere, after cellulose. In Aspergillus flavus (strain ATCC 200026 / FGSC A1120 / IAM 13836 / NRRL 3357 / JCM 12722 / SRRC 167), this protein is Probable exo-1,4-beta-xylosidase xlnD (xlnD).